Consider the following 140-residue polypeptide: uncharacterized protein (140 aa).

The next 2 helical transmembrane spans lie at 63–83 (LGFVHFSKWVELAWCFLTLAT) and 119–139 (ILLYLLICGVSLYGAIRIFIN).

It is found in the membrane. This is an uncharacterized protein from Schizosaccharomyces pombe (strain 972 / ATCC 24843) (Fission yeast).